The primary structure comprises 254 residues: NAD-dependent glycerol dehydrogenase (254 aa).

18-47 (VVTGAASGIGKAMAELFSEKGAYVVLLDIK) contributes to the NAD(+) binding site. Y160 (proton acceptor) is an active-site residue. Position 164 (K164) interacts with NAD(+).

This sequence belongs to the short-chain dehydrogenases/reductases (SDR) family. Requires Mg(2+) as cofactor. It depends on Mn(2+) as a cofactor.

Its subcellular location is the cytoplasm. It catalyses the reaction glycerol + NAD(+) = dihydroxyacetone + NADH + H(+). Inhibited by Zn(2+). Involved in the glycerol metabolism. Catalyzes the NAD-dependent oxidation of glycerol to dihydroxyacetone (glycerone). GolD specifically uses NAD. The chain is NAD-dependent glycerol dehydrogenase from Listeria innocua serovar 6a (strain ATCC BAA-680 / CLIP 11262).